The sequence spans 508 residues: Flagellin (508 aa).

This sequence belongs to the bacterial flagellin family.

It localises to the secreted. Its subcellular location is the bacterial flagellum. Flagellin is the subunit protein which polymerizes to form the filaments of bacterial flagella. The protein is Flagellin (fliC) of Salmonella oranienberg.